The primary structure comprises 158 residues: 6,7-dimethyl-8-ribityllumazine synthase (158 aa).

5-amino-6-(D-ribitylamino)uracil-binding positions include Phe-23, 61–63, and 85–87; these read SME and AVI. Residue 90–91 participates in (2S)-2-hydroxy-3-oxobutyl phosphate binding; sequence DT. Catalysis depends on His-93, which acts as the Proton donor. 5-amino-6-(D-ribitylamino)uracil is bound at residue Tyr-118. Arg-132 serves as a coordination point for (2S)-2-hydroxy-3-oxobutyl phosphate.

This sequence belongs to the DMRL synthase family.

The catalysed reaction is (2S)-2-hydroxy-3-oxobutyl phosphate + 5-amino-6-(D-ribitylamino)uracil = 6,7-dimethyl-8-(1-D-ribityl)lumazine + phosphate + 2 H2O + H(+). Its pathway is cofactor biosynthesis; riboflavin biosynthesis; riboflavin from 2-hydroxy-3-oxobutyl phosphate and 5-amino-6-(D-ribitylamino)uracil: step 1/2. Its function is as follows. Catalyzes the formation of 6,7-dimethyl-8-ribityllumazine by condensation of 5-amino-6-(D-ribitylamino)uracil with 3,4-dihydroxy-2-butanone 4-phosphate. This is the penultimate step in the biosynthesis of riboflavin. In Prochlorococcus marinus (strain MIT 9211), this protein is 6,7-dimethyl-8-ribityllumazine synthase.